We begin with the raw amino-acid sequence, 177 residues long: Zinc metalloproteinase-disintegrin-like scutiarin (177 aa).

In terms of domain architecture, Disintegrin spans 1-63 (NPCCDAATCK…ECPADVFHKN (63 aa)). 10 disulfides stabilise this stretch: Cys-3–Cys-26, Cys-17–Cys-23, Cys-22–Cys-48, Cys-35–Cys-55, Cys-42–Cys-74, Cys-67–Cys-79, Cys-86–Cys-136, Cys-101–Cys-147, Cys-114–Cys-124, and Cys-131–Cys-173. The short motif at 41–43 (ECD) is the D/ECD-tripeptide element. Ca(2+) is bound by residues Asp-43, Pro-44, Glu-46, Asp-58, and Val-59.

The protein belongs to the venom metalloproteinase (M12B) family. P-III subfamily. P-IIIa sub-subfamily. Monomer. Requires Zn(2+) as cofactor. In terms of processing, glycosylated. In terms of tissue distribution, expressed by the venom gland.

The protein localises to the secreted. Its function is as follows. Snake venom metalloproteinase that impairs hemostasis in the envenomed animal. This is Zinc metalloproteinase-disintegrin-like scutiarin from Crotalus scutulatus scutulatus (Mojave rattlesnake).